A 1079-amino-acid polypeptide reads, in one-letter code: Lon protease homolog, mitochondrial (1079 aa).

Residues 1–60 constitute a mitochondrion transit peptide; it reads MLRPRTYVRKLAWRCPRKSQLGLRLATSVSSHKSLPLPMNFDISHSQSAFRAYQDIIHRN. Positions 61-116 are enriched in basic and acidic residues; sequence KSVGDDEPSQRSENENNPSESDKDSNQDPETPKKDKESENDKEPEKEKDIENDNKV. 2 disordered regions span residues 61–158 and 262–285; these read KSVG…VDPV and LTTP…ESFP. Polar residues predominate over residues 117–131; the sequence is SSESNENVTLASSNT. A compositionally biased stretch (low complexity) spans 132 to 143; that stretch reads GGAAPPNGNNNG. The region spanning 165–391 is the Lon N-terminal domain; the sequence is LLAIPMKDRP…RALELLKVEL (227 aa). Residues 262–281 show a composition bias toward basic and acidic residues; sequence LTTPSSEKEAKSEEPSKEDA. Position 543–550 (543–550) interacts with ATP; sequence GPPGTGKT. Basic and acidic residues predominate over residues 756 to 765; sequence ALDSSKEKEG. The segment at 756-832 is disordered; that stretch reads ALDSSKEKEG…SEEDQQPEPK (77 aa). Residues 768–779 show a composition bias toward low complexity; sequence ASSEEANVNSES. Positions 780–802 are enriched in polar residues; it reads TKSNTSQAEPVAESSTDISTKSK. The segment covering 803-818 has biased composition (basic and acidic residues); the sequence is VASEKIETKEKKETNK. A Lon proteolytic domain is found at 865 to 1053; that stretch reads FPPPGVATGL…QEVFDKIFPN (189 aa). Catalysis depends on residues Ser959 and Lys1002.

It belongs to the peptidase S16 family. Homohexamer or homoheptamer. Organized in a ring with a central cavity.

The protein localises to the mitochondrion matrix. The enzyme catalyses Hydrolysis of proteins in presence of ATP.. In terms of biological role, ATP-dependent serine protease that mediates the selective degradation of misfolded, unassembled or oxidatively damaged polypeptides as well as certain short-lived regulatory proteins in the mitochondrial matrix. May also have a chaperone function in the assembly of inner membrane protein complexes. Participates in the regulation of mitochondrial gene expression and in the maintenance of the integrity of the mitochondrial genome. Binds to mitochondrial DNA in a site-specific manner. This chain is Lon protease homolog, mitochondrial, found in Debaryomyces hansenii (strain ATCC 36239 / CBS 767 / BCRC 21394 / JCM 1990 / NBRC 0083 / IGC 2968) (Yeast).